We begin with the raw amino-acid sequence, 397 residues long: 2-deoxy-scyllo-inosose synthase (397 aa).

NAD(+)-binding positions include aspartate 41, 71 to 74 (EPYK), 103 to 107 (GVIGN), 127 to 128 (TS), 138 to 140 (SLK), and 149 to 150 (KN). Lysine 140 is an active-site residue. Position 182 (glutamate 182) interacts with Co(2+). Residue glutamate 242 is part of the active site. Co(2+) is bound by residues histidine 245 and histidine 261.

This sequence belongs to the sugar phosphate cyclases superfamily. DOI synthase family. NAD(+) serves as cofactor. Requires Co(2+) as cofactor.

The catalysed reaction is D-glucose 6-phosphate = 2-deoxy-L-scyllo-inosose + phosphate. Its pathway is metabolic intermediate biosynthesis; 2-deoxystreptamine biosynthesis; 2-deoxystreptamine from D-glucose 6-phosphate: step 1/4. The protein operates within antibiotic biosynthesis; gentamicin biosynthesis. In terms of biological role, catalyzes the intramolecular carbocycle formation from D-glucose-6-phosphate to 2-deoxy-scyllo-inosose (DOI). The protein is 2-deoxy-scyllo-inosose synthase (gtmA) of Micromonospora echinospora (Micromonospora purpurea).